The primary structure comprises 180 residues: NAD(P)H-quinone oxidoreductase subunit I, chloroplastic (180 aa).

2 4Fe-4S ferredoxin-type domains span residues 55 to 84 (GRIH…VDWR) and 95 to 124 (LNYS…MTEE). [4Fe-4S] cluster is bound by residues Cys64, Cys67, Cys70, Cys74, Cys104, Cys107, Cys110, and Cys114.

The protein belongs to the complex I 23 kDa subunit family. In terms of assembly, NDH is composed of at least 16 different subunits, 5 of which are encoded in the nucleus. Requires [4Fe-4S] cluster as cofactor.

It localises to the plastid. It is found in the chloroplast thylakoid membrane. The catalysed reaction is a plastoquinone + NADH + (n+1) H(+)(in) = a plastoquinol + NAD(+) + n H(+)(out). It carries out the reaction a plastoquinone + NADPH + (n+1) H(+)(in) = a plastoquinol + NADP(+) + n H(+)(out). Functionally, NDH shuttles electrons from NAD(P)H:plastoquinone, via FMN and iron-sulfur (Fe-S) centers, to quinones in the photosynthetic chain and possibly in a chloroplast respiratory chain. The immediate electron acceptor for the enzyme in this species is believed to be plastoquinone. Couples the redox reaction to proton translocation, and thus conserves the redox energy in a proton gradient. The protein is NAD(P)H-quinone oxidoreductase subunit I, chloroplastic of Illicium oligandrum (Star anise).